The chain runs to 810 residues: Protein kinase C-binding protein NELL1 (810 aa).

An N-terminal signal peptide occupies residues 1 to 21 (MPMDVILVLWFCVCTARTVLG). N-linked (GlcNAc...) asparagine glycosylation is found at Asn-40, Asn-53, Asn-83, Asn-224, Asn-294, and Asn-372. A Laminin G-like domain is found at 57 to 227 (AFLFQDVQRE…TQCPNLNRTC (171 aa)). A VWFC 1 domain is found at 271-332 (KTCQVSGLLY…ISGQCCKVCR (62 aa)). 3 disulfides stabilise this stretch: Cys-395-Cys-407, Cys-401-Cys-416, and Cys-418-Cys-432. Residues Asp-434, Ile-435, and Glu-437 each contribute to the Ca(2+) site. Residues 434–475 (DIDECAAKMHYCHANTVCVNLPGLYRCDCVPGYIRVDDFSCT) form the EGF-like 1; calcium-binding domain. Disulfide bonds link Cys-438/Cys-451, Cys-445/Cys-460, Cys-462/Cys-474, Cys-480/Cys-493, Cys-487/Cys-502, Cys-504/Cys-515, Cys-519/Cys-529, Cys-523/Cys-535, Cys-537/Cys-546, Cys-553/Cys-566, Cys-560/Cys-575, Cys-577/Cys-594, Cys-600/Cys-613, Cys-607/Cys-622, and Cys-624/Cys-630. Residues Asn-453, Leu-454, and Leu-457 each coordinate Ca(2+). The region spanning 476–516 (EHDDCGSGQHNCDKNAICTNTVQGHSCTCQPGYVGNGTICK) is the EGF-like 2; calcium-binding domain. Asn-511 carries an N-linked (GlcNAc...) asparagine glycan. One can recognise an EGF-like 3 domain in the interval 517–547 (AFCEEGCRYGGTCVAPNKCVCPSGFTGSHCE). In terms of domain architecture, EGF-like 4; calcium-binding spans 549–587 (DIDECAEGFVECHNHSRCVNLPGWYHCECRSGFHDDGTY). Asn-562 is a glycosylation site (N-linked (GlcNAc...) asparagine). Residues 596–631 (DIDECALRTHTCWNDSACINLAGGFDCLCPSGPSCS) enclose the EGF-like 5; calcium-binding domain. Asn-609 carries an N-linked (GlcNAc...) asparagine glycan. 2 consecutive VWFC domains span residues 632-687 (GDCP…PECD) and 692-750 (SQCL…PRCV). Residue Asn-708 is glycosylated (N-linked (GlcNAc...) asparagine).

In terms of assembly, interacts with ATRAID; the interaction promotes osteoblast cell differentiation and mineralization. Homotrimer. Binds to PKC beta-1. Interacts with ROBO3.

It is found in the cytoplasm. The protein localises to the nucleus envelope. Its subcellular location is the secreted. Its function is as follows. Plays a role in the control of cell growth and differentiation. Promotes osteoblast cell differentiation and terminal mineralization. The chain is Protein kinase C-binding protein NELL1 (Nell1) from Rattus norvegicus (Rat).